A 308-amino-acid chain; its full sequence is tRNA dimethylallyltransferase (308 aa).

An ATP-binding site is contributed by 11–18; the sequence is GSTATGKS. 13-18 lines the substrate pocket; sequence TATGKS. The tract at residues 36 to 39 is interaction with substrate tRNA; the sequence is DSVQ.

It belongs to the IPP transferase family. In terms of assembly, monomer. Requires Mg(2+) as cofactor.

The catalysed reaction is adenosine(37) in tRNA + dimethylallyl diphosphate = N(6)-dimethylallyladenosine(37) in tRNA + diphosphate. Functionally, catalyzes the transfer of a dimethylallyl group onto the adenine at position 37 in tRNAs that read codons beginning with uridine, leading to the formation of N6-(dimethylallyl)adenosine (i(6)A). The chain is tRNA dimethylallyltransferase from Bdellovibrio bacteriovorus (strain ATCC 15356 / DSM 50701 / NCIMB 9529 / HD100).